The following is a 460-amino-acid chain: Polygalacturonase (460 aa).

The signal sequence occupies residues 1 to 26 (MALKTQLLWSFVVVFVVSFSTTSCSG). A glycan (N-linked (GlcNAc...) asparagine) is linked at asparagine 280. Catalysis depends on aspartate 292, which acts as the Proton donor. Residue histidine 315 is part of the active site. The N-linked (GlcNAc...) asparagine glycan is linked to asparagine 421.

The protein belongs to the glycosyl hydrolase 28 family.

It localises to the secreted. The protein resides in the cell wall. The enzyme catalyses (1,4-alpha-D-galacturonosyl)n+m + H2O = (1,4-alpha-D-galacturonosyl)n + (1,4-alpha-D-galacturonosyl)m.. Acts in concert with the pectinesterase, in the ripening process. Is involved in cell wall metabolism, specifically in polyuronide degradation. This chain is Polygalacturonase, found in Malus domestica (Apple).